The following is a 216-amino-acid chain: Octanoyltransferase (216 aa).

Residues 35-213 (NSNPDFIWIG…IIQEEFNFDF (179 aa)) form the BPL/LPL catalytic domain. Substrate contacts are provided by residues 77 to 84 (RGGEVTCH), 144 to 146 (SIG), and 157 to 159 (GFS). The active-site Acyl-thioester intermediate is Cys-175.

It belongs to the LipB family.

The protein localises to the cytoplasm. It catalyses the reaction octanoyl-[ACP] + L-lysyl-[protein] = N(6)-octanoyl-L-lysyl-[protein] + holo-[ACP] + H(+). Its pathway is protein modification; protein lipoylation via endogenous pathway; protein N(6)-(lipoyl)lysine from octanoyl-[acyl-carrier-protein]: step 1/2. Catalyzes the transfer of endogenously produced octanoic acid from octanoyl-acyl-carrier-protein onto the lipoyl domains of lipoate-dependent enzymes. Lipoyl-ACP can also act as a substrate although octanoyl-ACP is likely to be the physiological substrate. In Prochlorococcus marinus (strain MIT 9312), this protein is Octanoyltransferase.